Here is a 618-residue protein sequence, read N- to C-terminus: Proline--tRNA ligase (618 aa).

Belongs to the class-II aminoacyl-tRNA synthetase family. ProS type 1 subfamily. As to quaternary structure, homodimer.

It is found in the cytoplasm. It catalyses the reaction tRNA(Pro) + L-proline + ATP = L-prolyl-tRNA(Pro) + AMP + diphosphate. Catalyzes the attachment of proline to tRNA(Pro) in a two-step reaction: proline is first activated by ATP to form Pro-AMP and then transferred to the acceptor end of tRNA(Pro). As ProRS can inadvertently accommodate and process non-cognate amino acids such as alanine and cysteine, to avoid such errors it has two additional distinct editing activities against alanine. One activity is designated as 'pretransfer' editing and involves the tRNA(Pro)-independent hydrolysis of activated Ala-AMP. The other activity is designated 'posttransfer' editing and involves deacylation of mischarged Ala-tRNA(Pro). The misacylated Cys-tRNA(Pro) is not edited by ProRS. The protein is Proline--tRNA ligase of Streptococcus pyogenes serotype M18 (strain MGAS8232).